The sequence spans 429 residues: Histidine--tRNA ligase (429 aa).

Belongs to the class-II aminoacyl-tRNA synthetase family. In terms of assembly, homodimer.

The protein localises to the cytoplasm. The enzyme catalyses tRNA(His) + L-histidine + ATP = L-histidyl-tRNA(His) + AMP + diphosphate + H(+). This Streptococcus pneumoniae (strain 70585) protein is Histidine--tRNA ligase.